The chain runs to 299 residues: Oxaloacetate decarboxylase (299 aa).

Substrate is bound at residue Ser57. Mg(2+) is bound at residue Asp95. Positions 167 and 243 each coordinate substrate.

Belongs to the isocitrate lyase/PEP mutase superfamily. Oxaloacetate decarboxylase family. In terms of assembly, homotetramer; dimer of dimers. Mg(2+) is required as a cofactor.

The catalysed reaction is oxaloacetate + H(+) = pyruvate + CO2. In terms of biological role, catalyzes the decarboxylation of oxaloacetate into pyruvate. Seems to play a role in maintaining cellular concentrations of bicarbonate and pyruvate. This Paraburkholderia xenovorans (strain LB400) protein is Oxaloacetate decarboxylase.